Here is a 208-residue protein sequence, read N- to C-terminus: uncharacterized protein (208 aa).

Disordered regions lie at residues 91–115 (PGQA…PSQD), 127–156 (QSWS…KRPG), and 182–208 (NKLG…RKFK). Over residues 127-136 (QSWSSGTSRP) the composition is skewed to polar residues.

This is an uncharacterized protein from Rattus norvegicus (Rat).